A 324-amino-acid polypeptide reads, in one-letter code: tRNA-modifying protein YgfZ (324 aa).

Tryptophan 186 is a binding site for folate.

This sequence belongs to the tRNA-modifying YgfZ family.

The protein resides in the cytoplasm. In terms of biological role, folate-binding protein involved in regulating the level of ATP-DnaA and in the modification of some tRNAs. It is probably a key factor in regulatory networks that act via tRNA modification, such as initiation of chromosomal replication. This is tRNA-modifying protein YgfZ from Colwellia psychrerythraea (strain 34H / ATCC BAA-681) (Vibrio psychroerythus).